Consider the following 335-residue polypeptide: Beta-ketoacyl-[acyl-carrier-protein] synthase III 1 (335 aa).

Active-site residues include C116 and H256. Residues Q257–R261 are ACP-binding. Residue N286 is part of the active site.

Belongs to the thiolase-like superfamily. FabH family. Homodimer.

It localises to the cytoplasm. The catalysed reaction is malonyl-[ACP] + acetyl-CoA + H(+) = 3-oxobutanoyl-[ACP] + CO2 + CoA. It functions in the pathway lipid metabolism; fatty acid biosynthesis. Its function is as follows. Catalyzes the condensation reaction of fatty acid synthesis by the addition to an acyl acceptor of two carbons from malonyl-ACP. Catalyzes the first condensation reaction which initiates fatty acid synthesis and may therefore play a role in governing the total rate of fatty acid production. Possesses both acetoacetyl-ACP synthase and acetyl transacylase activities. Its substrate specificity determines the biosynthesis of branched-chain and/or straight-chain of fatty acids. The sequence is that of Beta-ketoacyl-[acyl-carrier-protein] synthase III 1 from Bacteroides thetaiotaomicron (strain ATCC 29148 / DSM 2079 / JCM 5827 / CCUG 10774 / NCTC 10582 / VPI-5482 / E50).